The sequence spans 369 residues: Ribosomal RNA large subunit methyltransferase M (369 aa).

S-adenosyl-L-methionine-binding positions include serine 198, 231–234, aspartate 250, aspartate 270, and aspartate 287; that span reads APGG. The Proton acceptor role is filled by lysine 316.

This sequence belongs to the class I-like SAM-binding methyltransferase superfamily. RNA methyltransferase RlmE family. RlmM subfamily. As to quaternary structure, monomer.

The protein localises to the cytoplasm. It carries out the reaction cytidine(2498) in 23S rRNA + S-adenosyl-L-methionine = 2'-O-methylcytidine(2498) in 23S rRNA + S-adenosyl-L-homocysteine + H(+). In terms of biological role, catalyzes the 2'-O-methylation at nucleotide C2498 in 23S rRNA. The sequence is that of Ribosomal RNA large subunit methyltransferase M from Idiomarina loihiensis (strain ATCC BAA-735 / DSM 15497 / L2-TR).